Consider the following 498-residue polypeptide: Calcium uptake protein, mitochondrial (498 aa).

A mitochondrion-targeting transit peptide spans 1–29 (MPALSHYRSVSSLPSVDRSFLLIQRLRIH). EF-hand domains are found at residues 216–241 (EFFMLFDVDNDGLISFKEYIFFVTLL), 243–278 (IPESSFAVAFKMFDTDNNGEIDKEEFKTVMSLMRSQ), 329–364 (LTEEMLRLEFAHYDYKRRGSISAKDFALSMVAAADA), and 437–472 (LSDNVIEIAFHVFDSNQDGNLSVDEFLRVLHRRERD). Residues Asp-222, Asp-224, Asp-226, Glu-233, Asp-256, Asp-258, Asn-260, Glu-262, and Glu-267 each coordinate Ca(2+). Ca(2+) contacts are provided by Asp-450, Asn-452, Asp-454, Asn-456, and Glu-461.

This sequence belongs to the MICU1 family. MICU1 subfamily. As to expression, expressed in both green and non-green tissues, including roots, shoots, floral buds and pollen.

The protein localises to the mitochondrion inner membrane. It localises to the mitochondrion intermembrane space. Calcium-binding protein maintaining matrix calcium levels at low concentration. Regulates mitochondrial calcium dynamics in planta by restricting influx. The sequence is that of Calcium uptake protein, mitochondrial from Arabidopsis thaliana (Mouse-ear cress).